A 146-amino-acid polypeptide reads, in one-letter code: uncharacterized protein (146 aa).

This is an uncharacterized protein from Orgyia pseudotsugata multicapsid polyhedrosis virus (OpMNPV).